The sequence spans 276 residues: Undecaprenyl-diphosphatase (276 aa).

The next 8 helical transmembrane spans lie at 1–21, 39–59, 84–104, 115–135, 159–179, 188–208, 222–242, and 253–273; these read MSWL…FLPV, AGAS…LIYF, YRLG…GLLF, LWLV…AEYY, LALM…LFLG, FGFL…LPDA, QLIV…AWFL, and FVGY…TGVL.

Belongs to the UppP family.

It is found in the cell membrane. The catalysed reaction is di-trans,octa-cis-undecaprenyl diphosphate + H2O = di-trans,octa-cis-undecaprenyl phosphate + phosphate + H(+). Its function is as follows. Catalyzes the dephosphorylation of undecaprenyl diphosphate (UPP). Confers resistance to bacitracin. The polypeptide is Undecaprenyl-diphosphatase (Mycolicibacterium smegmatis (strain ATCC 700084 / mc(2)155) (Mycobacterium smegmatis)).